Consider the following 99-residue polypeptide: NADH-quinone oxidoreductase subunit K (99 aa).

A run of 3 helical transmembrane segments spans residues 3 to 23, 28 to 48, and 59 to 79; these read PDNY…GVML, IVVF…FVTF, and VIAF…LGII.

It belongs to the complex I subunit 4L family. NDH-1 is composed of 14 different subunits. Subunits NuoA, H, J, K, L, M, N constitute the membrane sector of the complex.

The protein resides in the cell membrane. It carries out the reaction a quinone + NADH + 5 H(+)(in) = a quinol + NAD(+) + 4 H(+)(out). Functionally, NDH-1 shuttles electrons from NADH, via FMN and iron-sulfur (Fe-S) centers, to quinones in the respiratory chain. The immediate electron acceptor for the enzyme in this species is believed to be a menaquinone. Couples the redox reaction to proton translocation (for every two electrons transferred, four hydrogen ions are translocated across the cytoplasmic membrane), and thus conserves the redox energy in a proton gradient. This chain is NADH-quinone oxidoreductase subunit K, found in Mycobacteroides abscessus (strain ATCC 19977 / DSM 44196 / CCUG 20993 / CIP 104536 / JCM 13569 / NCTC 13031 / TMC 1543 / L948) (Mycobacterium abscessus).